Reading from the N-terminus, the 395-residue chain is MILTLDPQVAGASGDMVLGALIAVGADPNRLEEVVHEVSSLGHEVDVHVHEIQKRGIRAVRVEVDAEGDLRDPDELREAVKTVAENVLEDRWRELPELALKYLLRAEERVHGDLCHLHELGSSDTVVDLVGTAALLEDLNPKASEVLPPNVGSGTVETEHGRLPVPAPAVVEVLSEWDVGIVREGEGELLTPTGAALLRTIDELLPDPPPPYRVKRQGFGAGTKDLPDRPNVLRALICEPGGSGEHVRIVETSVDDVDGEAVGELIEAVLQLEGVHDVEVLHGFGKKGRPRFVIRVVTEDRPGIEREVFRELFRWTGTLGARVYRCTRVTADRRIVDVDGIRVKVSRFEDVHHAKPEWEDVRRKVDRESAPLTRARLVGDLRKRYEGDGEDGAGD.

The protein belongs to the LarC family.

The sequence is that of Putative nickel insertion protein from Methanopyrus kandleri (strain AV19 / DSM 6324 / JCM 9639 / NBRC 100938).